Consider the following 833-residue polypeptide: Protein translocase subunit SecA (833 aa).

ATP contacts are provided by residues Q87, 105–109 (GEGKT), and D494. The tract at residues 789 to 816 (PAAVAYSGGEAEAGPAQPHREDPKVGRN) is disordered. The span at 806 to 815 (PHREDPKVGR) shows a compositional bias: basic and acidic residues. Zn(2+) contacts are provided by C819, C821, C830, and C831.

It belongs to the SecA family. Monomer and homodimer. Part of the essential Sec protein translocation apparatus which comprises SecA, SecYEG and auxiliary proteins SecDF-YajC and YidC. Requires Zn(2+) as cofactor.

Its subcellular location is the cell inner membrane. It is found in the cytoplasm. The enzyme catalyses ATP + H2O + cellular proteinSide 1 = ADP + phosphate + cellular proteinSide 2.. In terms of biological role, part of the Sec protein translocase complex. Interacts with the SecYEG preprotein conducting channel. Has a central role in coupling the hydrolysis of ATP to the transfer of proteins into and across the cell membrane, serving as an ATP-driven molecular motor driving the stepwise translocation of polypeptide chains across the membrane. This is Protein translocase subunit SecA from Nitratidesulfovibrio vulgaris (strain DP4) (Desulfovibrio vulgaris).